A 298-amino-acid chain; its full sequence is Protoheme IX farnesyltransferase (298 aa).

The next 9 membrane-spanning stretches (helical) occupy residues 26-46 (VVSL…PGVV), 52-72 (IFAT…NCLV), 99-119 (FVFL…LVNP), 120-140 (LTMW…TVIL), 148-168 (IVIG…AVTG), 174-194 (ALLL…ALAL), 219-239 (LHVL…YATQ), 241-261 (SGLI…YYAV), and 276-296 (FRYS…DHYI).

This sequence belongs to the UbiA prenyltransferase family. Protoheme IX farnesyltransferase subfamily.

The protein localises to the cell inner membrane. It catalyses the reaction heme b + (2E,6E)-farnesyl diphosphate + H2O = Fe(II)-heme o + diphosphate. The protein operates within porphyrin-containing compound metabolism; heme O biosynthesis; heme O from protoheme: step 1/1. Converts heme B (protoheme IX) to heme O by substitution of the vinyl group on carbon 2 of heme B porphyrin ring with a hydroxyethyl farnesyl side group. This is Protoheme IX farnesyltransferase from Nitrosospira multiformis (strain ATCC 25196 / NCIMB 11849 / C 71).